The chain runs to 216 residues: Trimethylamine corrinoid protein 1 (216 aa).

The 92-residue stretch at 1 to 92 (MANKEEIIAK…EMEKRKSQTK (92 aa)) folds into the B12-binding N-terminal domain. The B12-binding domain maps to 94–216 (LGTIVIGTIE…VVSKVKAALL (123 aa)). Residue H107 coordinates methylcob(III)alamin.

The protein belongs to the methylamine corrinoid protein family. In terms of assembly, can form a complex with MttB.

It participates in one-carbon metabolism; methanogenesis from trimethylamine. Its function is as follows. Acts probably as a methyl group carrier between MttB and either MtbA or MtaA. This is Trimethylamine corrinoid protein 1 (mttC1) from Methanosarcina mazei (strain ATCC BAA-159 / DSM 3647 / Goe1 / Go1 / JCM 11833 / OCM 88) (Methanosarcina frisia).